Here is a 264-residue protein sequence, read N- to C-terminus: NADH-quinone oxidoreductase subunit B 1 (264 aa).

[4Fe-4S] cluster contacts are provided by cysteine 42, cysteine 43, cysteine 108, and cysteine 138.

Belongs to the complex I 20 kDa subunit family. NDH-1 is composed of 14 different subunits. Subunits NuoB, C, D, E, F, and G constitute the peripheral sector of the complex. It depends on [4Fe-4S] cluster as a cofactor.

It localises to the cell membrane. It carries out the reaction a quinone + NADH + 5 H(+)(in) = a quinol + NAD(+) + 4 H(+)(out). NDH-1 shuttles electrons from NADH, via FMN and iron-sulfur (Fe-S) centers, to quinones in the respiratory chain. The immediate electron acceptor for the enzyme in this species is believed to be ubiquinone. Couples the redox reaction to proton translocation (for every two electrons transferred, four hydrogen ions are translocated across the cytoplasmic membrane), and thus conserves the redox energy in a proton gradient. The polypeptide is NADH-quinone oxidoreductase subunit B 1 (Chloroflexus aurantiacus (strain ATCC 29366 / DSM 635 / J-10-fl)).